The chain runs to 53 residues: Rho GTPase-activating protein 6 (53 aa).

Its subcellular location is the cytoplasm. In terms of biological role, GTPase activator for the Rho-type GTPases by converting them to an inactive GDP-bound state. Could regulate the interactions of signaling molecules with the actin cytoskeleton. Promotes continuous elongation of cytoplasmic processes during cell motility and simultaneous retraction of the cell body changing the cell morphology. The polypeptide is Rho GTPase-activating protein 6 (arhgap6) (Takifugu rubripes (Japanese pufferfish)).